The sequence spans 342 residues: Cytosolic Fe-S cluster assembly factor NBP35 (342 aa).

[4Fe-4S] cluster-binding residues include Cys-33, Cys-47, Cys-50, and Cys-56. 86 to 93 (GKGGVGKS) lines the ATP pocket. [4Fe-4S] cluster is bound by residues Cys-259 and Cys-262.

This sequence belongs to the Mrp/NBP35 ATP-binding proteins family. NUBP1/NBP35 subfamily. Heterotetramer of 2 NBP35 and 2 CFD1 chains. [4Fe-4S] cluster serves as cofactor.

It is found in the cytoplasm. Functionally, component of the cytosolic iron-sulfur (Fe/S) protein assembly (CIA) machinery. Required for maturation of extramitochondrial Fe-S proteins. The NBP35-CFD1 heterotetramer forms a Fe-S scaffold complex, mediating the de novo assembly of an Fe-S cluster and its transfer to target apoproteins. This is Cytosolic Fe-S cluster assembly factor NBP35 from Gibberella zeae (strain ATCC MYA-4620 / CBS 123657 / FGSC 9075 / NRRL 31084 / PH-1) (Wheat head blight fungus).